A 187-amino-acid polypeptide reads, in one-letter code: Transmembrane protein 11-B, mitochondrial (187 aa).

The next 2 membrane-spanning stretches (helical) occupy residues 79–95 and 102–119; these read TAVL…LALP and VSLP…LYGI.

It belongs to the TMEM11 family.

The protein resides in the mitochondrion inner membrane. Its function is as follows. Plays a role in mitochondrial morphogenesis. The sequence is that of Transmembrane protein 11-B, mitochondrial (tmem11-b) from Xenopus laevis (African clawed frog).